A 319-amino-acid polypeptide reads, in one-letter code: Transmembrane and ubiquitin-like domain-containing protein 2 (319 aa).

Residues 36–56 traverse the membrane as a helical segment; the sequence is VMVVAGVVVLTLALVLAWLST. 2 disordered regions span residues 88–130 and 146–165; these read VNQG…GDME and QAGL…DSTC. The span at 95-111 shows a compositional bias: basic and acidic residues; the sequence is PTEHPHPSGGSDDKAEE. A Ubiquitin-like domain is found at 173–246; the sequence is INVRLKFLND…IHCHRSPPGA (74 aa). 2 consecutive transmembrane segments (helical) span residues 264-284 and 293-313; these read LGVN…GVVW and FFTA…SFLV.

The protein resides in the membrane. This chain is Transmembrane and ubiquitin-like domain-containing protein 2 (Tmub2), found in Rattus norvegicus (Rat).